Here is a 166-residue protein sequence, read N- to C-terminus: Large ribosomal subunit protein uL10 (166 aa).

The protein belongs to the universal ribosomal protein uL10 family. In terms of assembly, part of the ribosomal stalk of the 50S ribosomal subunit. The N-terminus interacts with L11 and the large rRNA to form the base of the stalk. The C-terminus forms an elongated spine to which L12 dimers bind in a sequential fashion forming a multimeric L10(L12)X complex.

Its function is as follows. Forms part of the ribosomal stalk, playing a central role in the interaction of the ribosome with GTP-bound translation factors. The protein is Large ribosomal subunit protein uL10 of Pseudomonas syringae pv. tomato (strain ATCC BAA-871 / DC3000).